We begin with the raw amino-acid sequence, 86 residues long: Small ribosomal subunit protein bS20 (86 aa).

The segment at 1-21 (MANTKSAIKAARKSLRLHDRN) is disordered.

The protein belongs to the bacterial ribosomal protein bS20 family.

Functionally, binds directly to 16S ribosomal RNA. The polypeptide is Small ribosomal subunit protein bS20 (Opitutus terrae (strain DSM 11246 / JCM 15787 / PB90-1)).